The sequence spans 891 residues: UPF0182 protein Glov_0814 (891 aa).

A run of 7 helical transmembrane segments spans residues 6 to 26 (LTPI…LLAY), 51 to 71 (GIGV…LLYA), 102 to 122 (IGVL…ALQW), 164 to 184 (FMLL…GGIA), 202 to 222 (ILLA…GFGL), 244 to 264 (TLTT…FGLW), and 266 to 286 (GTWR…MIGM).

The protein belongs to the UPF0182 family.

The protein localises to the cell membrane. The sequence is that of UPF0182 protein Glov_0814 from Trichlorobacter lovleyi (strain ATCC BAA-1151 / DSM 17278 / SZ) (Geobacter lovleyi).